Reading from the N-terminus, the 375-residue chain is Carbamoyl phosphate synthase small chain (375 aa).

Positions 1–186 (MKAILALEDG…IVDGTYAWPG (186 aa)) are CPSase. Serine 45, glycine 238, and glycine 240 together coordinate L-glutamine. The 186-residue stretch at 190–375 (RLVVFDMGIK…RNLVRKETGK (186 aa)) folds into the Glutamine amidotransferase type-1 domain. The Nucleophile role is filled by cysteine 265. The L-glutamine site is built by leucine 266, glutamine 269, asparagine 307, glycine 309, and phenylalanine 310. Catalysis depends on residues histidine 348 and glutamate 350.

This sequence belongs to the CarA family. As to quaternary structure, composed of two chains; the small (or glutamine) chain promotes the hydrolysis of glutamine to ammonia, which is used by the large (or ammonia) chain to synthesize carbamoyl phosphate. Tetramer of heterodimers (alpha,beta)4.

The enzyme catalyses hydrogencarbonate + L-glutamine + 2 ATP + H2O = carbamoyl phosphate + L-glutamate + 2 ADP + phosphate + 2 H(+). It carries out the reaction L-glutamine + H2O = L-glutamate + NH4(+). The protein operates within amino-acid biosynthesis; L-arginine biosynthesis; carbamoyl phosphate from bicarbonate: step 1/1. It participates in pyrimidine metabolism; UMP biosynthesis via de novo pathway; (S)-dihydroorotate from bicarbonate: step 1/3. Its function is as follows. Small subunit of the glutamine-dependent carbamoyl phosphate synthetase (CPSase). CPSase catalyzes the formation of carbamoyl phosphate from the ammonia moiety of glutamine, carbonate, and phosphate donated by ATP, constituting the first step of 2 biosynthetic pathways, one leading to arginine and/or urea and the other to pyrimidine nucleotides. The small subunit (glutamine amidotransferase) binds and cleaves glutamine to supply the large subunit with the substrate ammonia. The polypeptide is Carbamoyl phosphate synthase small chain (Solidesulfovibrio magneticus (strain ATCC 700980 / DSM 13731 / RS-1) (Desulfovibrio magneticus)).